A 392-amino-acid polypeptide reads, in one-letter code: Branched-chain-amino-acid aminotransferase, mitochondrial (392 aa).

The N-terminal 27 residues, 1-27 (MAAAALGQIWARKLLSVPWLLCGPRRY), are a transit peptide targeting the mitochondrion. Tyr168 provides a ligand contact to substrate. N6-(pyridoxal phosphate)lysine is present on Lys229. N6-acetyllysine is present on Lys321.

Belongs to the class-IV pyridoxal-phosphate-dependent aminotransferase family. As to quaternary structure, homodimer. Pyridoxal 5'-phosphate is required as a cofactor. Ubiquitous.

It localises to the mitochondrion. It carries out the reaction L-leucine + 2-oxoglutarate = 4-methyl-2-oxopentanoate + L-glutamate. The catalysed reaction is L-isoleucine + 2-oxoglutarate = (S)-3-methyl-2-oxopentanoate + L-glutamate. It catalyses the reaction L-valine + 2-oxoglutarate = 3-methyl-2-oxobutanoate + L-glutamate. Catalyzes the first reaction in the catabolism of the essential branched chain amino acids leucine, isoleucine, and valine. May also function as a transporter of branched chain alpha-keto acids. This chain is Branched-chain-amino-acid aminotransferase, mitochondrial (BCAT2), found in Homo sapiens (Human).